Consider the following 157-residue polypeptide: Cyclic pyranopterin monophosphate synthase (157 aa).

Substrate contacts are provided by residues 74 to 76 and 111 to 112; these read MCH and ME. The active site involves D126.

This sequence belongs to the MoaC family. In terms of assembly, homohexamer; trimer of dimers.

It catalyses the reaction (8S)-3',8-cyclo-7,8-dihydroguanosine 5'-triphosphate = cyclic pyranopterin phosphate + diphosphate. It participates in cofactor biosynthesis; molybdopterin biosynthesis. Catalyzes the conversion of (8S)-3',8-cyclo-7,8-dihydroguanosine 5'-triphosphate to cyclic pyranopterin monophosphate (cPMP). The protein is Cyclic pyranopterin monophosphate synthase of Carboxydothermus hydrogenoformans (strain ATCC BAA-161 / DSM 6008 / Z-2901).